We begin with the raw amino-acid sequence, 239 residues long: ATP synthase subunit a (239 aa).

6 helical membrane-spanning segments follow: residues 31-51, 91-111, 125-145, 151-171, 194-214, and 215-235; these read FLLQ…LGLG, VFPL…LGMI, AACA…FHGV, FMGP…IGHI, ILFF…LGLF, and TGFI…AGAI.

The protein belongs to the ATPase A chain family. As to quaternary structure, F-type ATPases have 2 components, CF(1) - the catalytic core - and CF(0) - the membrane proton channel. CF(1) has five subunits: alpha(3), beta(3), gamma(1), delta(1), epsilon(1). CF(0) has three main subunits: a(1), b(2) and c(9-12). The alpha and beta chains form an alternating ring which encloses part of the gamma chain. CF(1) is attached to CF(0) by a central stalk formed by the gamma and epsilon chains, while a peripheral stalk is formed by the delta and b chains.

It is found in the cell inner membrane. Functionally, key component of the proton channel; it plays a direct role in the translocation of protons across the membrane. In Syntrophobacter fumaroxidans (strain DSM 10017 / MPOB), this protein is ATP synthase subunit a.